The following is a 487-amino-acid chain: Glutamyl-tRNA(Gln) amidotransferase subunit A (487 aa).

Catalysis depends on charge relay system residues Lys80 and Ser155. Catalysis depends on Ser179, which acts as the Acyl-ester intermediate.

Belongs to the amidase family. GatA subfamily. As to quaternary structure, heterotrimer of A, B and C subunits.

The catalysed reaction is L-glutamyl-tRNA(Gln) + L-glutamine + ATP + H2O = L-glutaminyl-tRNA(Gln) + L-glutamate + ADP + phosphate + H(+). Allows the formation of correctly charged Gln-tRNA(Gln) through the transamidation of misacylated Glu-tRNA(Gln) in organisms which lack glutaminyl-tRNA synthetase. The reaction takes place in the presence of glutamine and ATP through an activated gamma-phospho-Glu-tRNA(Gln). This chain is Glutamyl-tRNA(Gln) amidotransferase subunit A, found in Chloroflexus aurantiacus (strain ATCC 29366 / DSM 635 / J-10-fl).